The primary structure comprises 223 residues: Uracil-DNA glycosylase (223 aa).

Residue Asp-64 is the Proton acceptor of the active site.

The protein belongs to the uracil-DNA glycosylase (UDG) superfamily. UNG family.

The protein resides in the cytoplasm. The enzyme catalyses Hydrolyzes single-stranded DNA or mismatched double-stranded DNA and polynucleotides, releasing free uracil.. Its function is as follows. Excises uracil residues from the DNA which can arise as a result of misincorporation of dUMP residues by DNA polymerase or due to deamination of cytosine. This is Uracil-DNA glycosylase from Desulfitobacterium hafniense (strain DSM 10664 / DCB-2).